Consider the following 117-residue polypeptide: Large ribosomal subunit protein uL18 (117 aa).

This sequence belongs to the universal ribosomal protein uL18 family. As to quaternary structure, part of the 50S ribosomal subunit; part of the 5S rRNA/L5/L18/L25 subcomplex. Contacts the 5S and 23S rRNAs.

Its function is as follows. This is one of the proteins that bind and probably mediate the attachment of the 5S RNA into the large ribosomal subunit, where it forms part of the central protuberance. The chain is Large ribosomal subunit protein uL18 from Methylobacillus flagellatus (strain ATCC 51484 / DSM 6875 / VKM B-1610 / KT).